The following is a 102-amino-acid chain: Co-chaperonin GroES (102 aa).

The protein belongs to the GroES chaperonin family. As to quaternary structure, heptamer of 7 subunits arranged in a ring. Interacts with the chaperonin GroEL.

The protein resides in the cytoplasm. Functionally, together with the chaperonin GroEL, plays an essential role in assisting protein folding. The GroEL-GroES system forms a nano-cage that allows encapsulation of the non-native substrate proteins and provides a physical environment optimized to promote and accelerate protein folding. GroES binds to the apical surface of the GroEL ring, thereby capping the opening of the GroEL channel. The polypeptide is Co-chaperonin GroES (Chlamydia pneumoniae (Chlamydophila pneumoniae)).